The sequence spans 58 residues: Single-pass membrane and coiled-coil domain-containing protein 4 homolog (58 aa).

Residues 1–31 adopt a coiled-coil conformation; that stretch reads MRQLKGKVKETRKQKKERKLDNLETQAKIRT. Residues 31–51 traverse the membrane as a helical segment; the sequence is TVVLPALGVLAVFLVLFVYLK.

The protein belongs to the SMCO4 family.

Its subcellular location is the membrane. The protein is Single-pass membrane and coiled-coil domain-containing protein 4 homolog of Drosophila melanogaster (Fruit fly).